We begin with the raw amino-acid sequence, 93 residues long: Small ribosomal subunit protein uS19 (93 aa).

This sequence belongs to the universal ribosomal protein uS19 family.

Its function is as follows. Protein S19 forms a complex with S13 that binds strongly to the 16S ribosomal RNA. The sequence is that of Small ribosomal subunit protein uS19 from Parafrankia sp. (strain EAN1pec).